Here is an 863-residue protein sequence, read N- to C-terminus: Paramyosin (863 aa).

The segment at 1 to 18 (MSESHVKISRTIIRGTSP) is nonhelical region. Positions 19–836 (STVRLESRVR…ERTITIKRTI (818 aa)) form a coiled coil. The segment at 837–863 (GGPGSRAVSVVREINSVSRGNRATSIM) is nonhelical region.

Belongs to the paramyosin family. Homodimer or monomer in secreted form.

It localises to the cytoplasm. It is found in the myofibril. The protein resides in the secreted. In terms of biological role, paramyosin is a major structural component of many thick filaments isolated from invertebrate muscles. It is a prominent antigen in human cysticercosis, may have a role as a modulator of the host immune response. It is able to bind collagen and has complement inhibitor activity. This Taenia solium (Pork tapeworm) protein is Paramyosin (PMY).